Here is a 25-residue protein sequence, read N- to C-terminus: Grammistin Pp 3 (25 aa).

Belongs to the grammistin family. Group 3 subfamily. As to quaternary structure, exists as aggregates of 3-4 molecules. In terms of tissue distribution, expressed by the skin glands.

The protein resides in the secreted. Functionally, thanks to its abundant amphiphilic alpha-helices, it may integrate into membrane phospholipids, leading to lysis of the membrane. Has hemolytic activity. Has antibacterial activity with a broad spectrum against various species of bacteria including both Gram-positive and Gram-negative groups. Also has ichthyotoxic activity. The polypeptide is Grammistin Pp 3 (Pogonoperca punctata (Clown grouper)).